Reading from the N-terminus, the 1938-residue chain is Myosin-1 (1938 aa).

The Myosin N-terminal SH3-like domain maps to 33-82 (DAKTSVFVADPKESFVKATVQSREGGKVTAKTEAGATVTVKEDQCFPMNP). A phosphothreonine mark is found at Thr-64 and Thr-69. A Myosin motor domain is found at 86–781 (DKIEDMAMMT…LLGLLEEMRD (696 aa)). Lys-130 is subject to N6,N6,N6-trimethyllysine. 179 to 186 (GESGAGKT) lines the ATP pocket. Residue Tyr-389 is modified to Phosphotyrosine. Thr-419 is subject to Phosphothreonine. Tyr-424 is subject to Phosphotyrosine. Ser-625 carries the post-translational modification Phosphoserine. The segment at 658–680 (LNKLMTNLRSTHPHFVRCIIPNE) is actin-binding. His-756 carries the post-translational modification Pros-methylhistidine. The actin-binding stretch occupies residues 760 to 774 (KFGHTKVFFKAGLLG). The IQ domain occupies 784–813 (LAQIITRTQARCRGFLARVEYQRMVERRES). The stretch at 842-1938 (LLKSAETEKE…EVHTKIISEE (1097 aa)) forms a coiled coil. A phosphoserine mark is found at Ser-1091 and Ser-1095. Disordered stretches follow at residues 1124-1146 (EIEA…SREL) and 1152-1171 (RLEE…KKRE). The span at 1127-1146 (AERASRAKAEKQRSDLSREL) shows a compositional bias: basic and acidic residues. 2 positions are modified to phosphoserine: Ser-1161 and Ser-1236. At Thr-1240 the chain carries Phosphothreonine. Ser-1242 carries the post-translational modification Phosphoserine. The residue at position 1254 (Thr-1254) is a Phosphothreonine. A Phosphoserine modification is found at Ser-1260. Thr-1285 carries the phosphothreonine modification. A phosphoserine mark is found at Ser-1291, Ser-1302, and Ser-1305. Tyr-1463 bears the Phosphotyrosine mark. Thr-1466 carries the phosphothreonine modification. The residue at position 1473 (Ser-1473) is a Phosphoserine. Residue Tyr-1491 is modified to Phosphotyrosine. Ser-1494 is modified (phosphoserine). The residue at position 1500 (Thr-1500) is a Phosphothreonine. At Ser-1513 the chain carries Phosphoserine. Thr-1516 carries the phosphothreonine modification. Phosphoserine is present on residues Ser-1541, Ser-1553, Ser-1573, Ser-1713, and Ser-1725. 2 positions are modified to phosphothreonine: Thr-1729 and Thr-1735. The residue at position 1738 (Ser-1738) is a Phosphoserine.

It belongs to the TRAFAC class myosin-kinesin ATPase superfamily. Myosin family. As to quaternary structure, muscle myosin is a hexameric protein that consists of 2 heavy chain subunits (MHC), 2 alkali light chain subunits (MLC) and 2 regulatory light chain subunits (MLC-2). Interacts with SLC26A5.

It localises to the cytoplasm. Its subcellular location is the myofibril. Its function is as follows. Required for normal hearing. It plays a role in cochlear amplification of auditory stimuli, likely through the positive regulation of prestin (SLC26A5) activity and outer hair cell (OHC) electromotility. In Equus caballus (Horse), this protein is Myosin-1 (MYH1).